The chain runs to 455 residues: Chromosomal replication initiator protein DnaA (455 aa).

Positions methionine 1 to arginine 75 are domain I, interacts with DnaA modulators. The tract at residues arginine 75–threonine 117 is domain II. Residues arginine 84 to serine 93 are compositionally biased toward basic and acidic residues. The interval arginine 84–threonine 107 is disordered. The tract at residues lysine 118–serine 334 is domain III, AAA+ region. 4 residues coordinate ATP: glycine 162, glycine 164, lysine 165, and threonine 166. The segment at arginine 335–serine 455 is domain IV, binds dsDNA.

Belongs to the DnaA family. As to quaternary structure, oligomerizes as a right-handed, spiral filament on DNA at oriC.

Its subcellular location is the cytoplasm. Its function is as follows. Plays an essential role in the initiation and regulation of chromosomal replication. ATP-DnaA binds to the origin of replication (oriC) to initiate formation of the DNA replication initiation complex once per cell cycle. Binds the DnaA box (a 9 base pair repeat at the origin) and separates the double-stranded (ds)DNA. Forms a right-handed helical filament on oriC DNA; dsDNA binds to the exterior of the filament while single-stranded (ss)DNA is stabiized in the filament's interior. The ATP-DnaA-oriC complex binds and stabilizes one strand of the AT-rich DNA unwinding element (DUE), permitting loading of DNA polymerase. After initiation quickly degrades to an ADP-DnaA complex that is not apt for DNA replication. Binds acidic phospholipids. The polypeptide is Chromosomal replication initiator protein DnaA (Lactiplantibacillus plantarum (strain ATCC BAA-793 / NCIMB 8826 / WCFS1) (Lactobacillus plantarum)).